A 155-amino-acid chain; its full sequence is Acyl-CoA-binding domain-containing protein 3 (155 aa).

One can recognise an ACB domain in the interval Leu3 to Ala88. An acyl-CoA is bound by residues Lys15, Tyr30–Lys34, Lys56, and Tyr75.

This sequence belongs to the ACBP family. As to expression, highly expressed in leaves. Expressed at low levels in roots and seeds.

The protein localises to the cytoplasm. It localises to the cytosol. Functionally, binds medium- and long-chain acyl-CoA esters with high affinity. Can interact in vitro with linolenoyl-CoA. Binds phosphatidic acid (PA) and phosphatidylcholine (PC) in vitro. May play a role in the biosynthesis of phospholipids. The polypeptide is Acyl-CoA-binding domain-containing protein 3 (Oryza sativa subsp. japonica (Rice)).